The primary structure comprises 141 residues: Arsenate reductase (141 aa).

Cysteine 12 serves as the catalytic Nucleophile; cysteine thioarsenate intermediate.

Belongs to the ArsC family.

The enzyme catalyses [glutaredoxin]-dithiol + arsenate + glutathione + H(+) = glutathionyl-S-S-[glutaredoxin] + arsenite + H2O. Involved in resistance to arsenate. Catalyzes the reduction of arsenate [As(V)] to arsenite [As(III)]. The sequence is that of Arsenate reductase from Escherichia coli (strain K12).